The sequence spans 274 residues: Type III pantothenate kinase (274 aa).

ATP is bound at residue 6 to 13 (DVRNTHTV). 109–112 (GADR) is a binding site for substrate. Catalysis depends on D111, which acts as the Proton acceptor. D131 lines the K(+) pocket. S134 provides a ligand contact to ATP. T186 contributes to the substrate binding site.

This sequence belongs to the type III pantothenate kinase family. In terms of assembly, homodimer. NH4(+) serves as cofactor. Requires K(+) as cofactor.

It localises to the cytoplasm. It carries out the reaction (R)-pantothenate + ATP = (R)-4'-phosphopantothenate + ADP + H(+). It participates in cofactor biosynthesis; coenzyme A biosynthesis; CoA from (R)-pantothenate: step 1/5. In terms of biological role, catalyzes the phosphorylation of pantothenate (Pan), the first step in CoA biosynthesis. This Mycobacterium leprae (strain Br4923) protein is Type III pantothenate kinase.